The sequence spans 212 residues: Peptide methionine sulfoxide reductase MsrA (212 aa).

Residue C52 is part of the active site.

It belongs to the MsrA Met sulfoxide reductase family.

It catalyses the reaction L-methionyl-[protein] + [thioredoxin]-disulfide + H2O = L-methionyl-(S)-S-oxide-[protein] + [thioredoxin]-dithiol. The enzyme catalyses [thioredoxin]-disulfide + L-methionine + H2O = L-methionine (S)-S-oxide + [thioredoxin]-dithiol. Functionally, has an important function as a repair enzyme for proteins that have been inactivated by oxidation. Catalyzes the reversible oxidation-reduction of methionine sulfoxide in proteins to methionine. This is Peptide methionine sulfoxide reductase MsrA from Shigella boydii serotype 18 (strain CDC 3083-94 / BS512).